The chain runs to 350 residues: Uroporphyrinogen decarboxylase (350 aa).

Residues 23–27 (RQAGR), Asp72, Tyr149, Ser204, and His318 contribute to the substrate site.

Belongs to the uroporphyrinogen decarboxylase family. Homodimer.

The protein resides in the cytoplasm. The enzyme catalyses uroporphyrinogen III + 4 H(+) = coproporphyrinogen III + 4 CO2. Its pathway is porphyrin-containing compound metabolism; protoporphyrin-IX biosynthesis; coproporphyrinogen-III from 5-aminolevulinate: step 4/4. In terms of biological role, catalyzes the decarboxylation of four acetate groups of uroporphyrinogen-III to yield coproporphyrinogen-III. In Carboxydothermus hydrogenoformans (strain ATCC BAA-161 / DSM 6008 / Z-2901), this protein is Uroporphyrinogen decarboxylase.